The chain runs to 29 residues: Acidic phospholipase A2 Omo-E6 (29 aa).

2 residues coordinate Ca(2+): tyrosine 27 and glycine 29.

It depends on Ca(2+) as a cofactor. In terms of tissue distribution, expressed by the venom gland.

It is found in the secreted. The catalysed reaction is a 1,2-diacyl-sn-glycero-3-phosphocholine + H2O = a 1-acyl-sn-glycero-3-phosphocholine + a fatty acid + H(+). Its function is as follows. Snake venom phospholipase A2 (PLA2) that inhibits the ADP- and collagen-induced human platelet aggregation. Exhibits strong hydrolytic activities and prefers the anionic micelles (dPPC with deoxycholate) to the zwitterionic micelles (dPPC with Triton X-100). PLA2 catalyzes the calcium-dependent hydrolysis of the 2-acyl groups in 3-sn-phosphoglycerides. This is Acidic phospholipase A2 Omo-E6 from Ovophis monticola (Chinese mountain pitviper).